A 353-amino-acid chain; its full sequence is Probable protein phosphatase 2C 48 (353 aa).

The PPM-type phosphatase domain occupies 54-348 (FAAVCSRRGE…DDCSAICLFF (295 aa)). Positions 90, 91, 293, and 339 each coordinate Mn(2+).

This sequence belongs to the PP2C family. Mg(2+) serves as cofactor. The cofactor is Mn(2+).

It catalyses the reaction O-phospho-L-seryl-[protein] + H2O = L-seryl-[protein] + phosphate. The catalysed reaction is O-phospho-L-threonyl-[protein] + H2O = L-threonyl-[protein] + phosphate. The protein is Probable protein phosphatase 2C 48 of Oryza sativa subsp. japonica (Rice).